Here is a 344-residue protein sequence, read N- to C-terminus: Phenylalanine--tRNA ligase alpha subunit (344 aa).

Glu256 contributes to the Mg(2+) binding site.

This sequence belongs to the class-II aminoacyl-tRNA synthetase family. Phe-tRNA synthetase alpha subunit type 1 subfamily. In terms of assembly, tetramer of two alpha and two beta subunits. Requires Mg(2+) as cofactor.

Its subcellular location is the cytoplasm. The catalysed reaction is tRNA(Phe) + L-phenylalanine + ATP = L-phenylalanyl-tRNA(Phe) + AMP + diphosphate + H(+). The sequence is that of Phenylalanine--tRNA ligase alpha subunit from Bacillus anthracis (strain CDC 684 / NRRL 3495).